Reading from the N-terminus, the 230-residue chain is Probable methylthioribulose-1-phosphate dehydratase (230 aa).

Cysteine 87 lines the substrate pocket. Zn(2+) contacts are provided by histidine 105 and histidine 107. Glutamate 129 (proton donor/acceptor) is an active-site residue. Histidine 185 provides a ligand contact to Zn(2+).

This sequence belongs to the aldolase class II family. MtnB subfamily. Requires Zn(2+) as cofactor.

The protein resides in the cytoplasm. It carries out the reaction 5-(methylsulfanyl)-D-ribulose 1-phosphate = 5-methylsulfanyl-2,3-dioxopentyl phosphate + H2O. Its pathway is amino-acid biosynthesis; L-methionine biosynthesis via salvage pathway; L-methionine from S-methyl-5-thio-alpha-D-ribose 1-phosphate: step 2/6. In terms of biological role, catalyzes the dehydration of methylthioribulose-1-phosphate (MTRu-1-P) into 2,3-diketo-5-methylthiopentyl-1-phosphate (DK-MTP-1-P). The sequence is that of Probable methylthioribulose-1-phosphate dehydratase from Drosophila grimshawi (Hawaiian fruit fly).